We begin with the raw amino-acid sequence, 612 residues long: E3 ubiquitin-protein ligase synoviolin (612 aa).

At 1 to 4 (MFRT) the chain is on the cytoplasmic side. Residues 1 to 251 (MFRTAVMMAA…LFAIRPMYLA (251 aa)) are involved in FAM8A1 interaction. A helical membrane pass occupies residues 5-25 (AVMMAASLALTGAVVAHAYYL). The segment at 21–42 (HAYYLKHQFYPTVVYLTKSSPS) is interaction with SEL1L. The Lumenal portion of the chain corresponds to 26–41 (KHQFYPTVVYLTKSSP). Residues 42–62 (SMAVLYIQAFVLVFLLGKVMG) form a helical membrane-spanning segment. At 63–98 (KVFFGQLRAAEMEHLLERSWYAVTETCLAFTVFRDD) the chain is on the cytoplasmic side. A helical transmembrane segment spans residues 99 to 119 (FSPRFVALFTLLLFLKCFHWL). Residues 120–140 (AEDRVDFMERSPNISWLFHCR) are Lumenal-facing. Residues 141 to 161 (IVSLMFLLGILDFLFVSHAYH) form a helical membrane-spanning segment. Residues 162-169 (SILTRGAS) are Cytoplasmic-facing. The chain crosses the membrane as a helical span at residues 170 to 190 (VQLVFGFEYAILMTMVLTIFI). Topologically, residues 191 to 224 (KYVLHSVDLQSENPWDNKAVYMLYTELFTGFIKV) are lumenal. A helical membrane pass occupies residues 225–245 (LLYMAFMTIMIKVHTFPLFAI). Positions 236–270 (KVHTFPLFAIRPMYLAMRQFKKAVTDAIMSRRAIR) are interaction with p53/TP53. Residues 246 to 612 (RPMYLAMRQF…LQKLESPVAH (367 aa)) are Cytoplasmic-facing. Residues Cys291, Cys294, Cys307, His309, His312, Cys315, Cys326, and Cys329 each coordinate Zn(2+). Residues 291 to 330 (CIICREEMVTGAKRLPCNHIFHTSCLRSWFQRQQTCPTCR) form an RING-type; atypical zinc finger. Disordered regions lie at residues 337–375 (SLPA…GLLP) and 393–449 (PVPP…PGFP). Pro residues-rich tracts occupy residues 341–375 (QSPP…GLLP) and 393–409 (PVPP…PPPT). The segment covering 416–434 (PSGAATTTAAGTSTSAPAP) has biased composition (low complexity). The span at 435 to 449 (GSVPGPEAGPAPGFP) shows a compositional bias: pro residues. Positions 474-529 (GFAGLTPEELRALEGHERQHLEARLQSLRNIHTLLDAAMLQINQYLTVLASLGPPR) are HAF-H domain; necessary to form higher-order Hrd1 complexes. Residues 530–612 (PATSVNPTEE…LQKLESPVAH (83 aa)) form a disordered region. Residues 539–559 (ETASTVVSAAPSTSAPSSEAP) show a composition bias toward low complexity. Pro residues predominate over residues 560–570 (TPSPGASPPIP). The segment covering 586-595 (ELPEDGEPDA) has biased composition (acidic residues). The residue at position 608 (Ser608) is a Phosphoserine.

The protein belongs to the HRD1 family. Homodimer. Interacts with p53/TP53. Interacts with HTT. Component of the HRD1 complex, which comprises at least SYNV1/HRD1, DERL1/2, FAM8A1, HERPUD1/HERP, OS9, SEL1L and UBE2J1. FAM8A1 is stabilized by interaction with SYNV1, which prevents its proteasomal degradation. OS9 and UBE2J1 recruitment to the complex may be mediated by SEL1L. SYNV1 assembles with SEL1L and FAM8A1 through its transmembrane domains, but interaction with its cytoplasmic domain is required to confer stability to FAM8A1 and enhance recruitment of HERPUD1. The HRD1 complex also associates with VIMP and may transfer misfolded proteins from the endoplasmic reticulum to VCP. May form a complex with ERLEC1; HSPA5; OS9 and SEL1L. Interacts with VCP. Interacts with UBXN6. Interacts with BAG6. Interacts with NFE2L1. Interacts (via N-terminus) with components of the pre-B cell receptor, including IGLL1 and VPREB1A. Interacts with CREB3L3; this interaction leads to CREB3L3 ubiquitination and proteasomal degradation. Post-translationally, auto-ubiquitinated. Deubiquitinated by USP19. Widely expressed, with highest levels in bone, spleen, lung and testis. In the brain, present in neurons but not in glial cells. Up-regulated in synovial tissues from mice with collagen-induced arthritis (at protein level). Expressed in the liver.

Its subcellular location is the endoplasmic reticulum membrane. It carries out the reaction S-ubiquitinyl-[E2 ubiquitin-conjugating enzyme]-L-cysteine + [acceptor protein]-L-lysine = [E2 ubiquitin-conjugating enzyme]-L-cysteine + N(6)-ubiquitinyl-[acceptor protein]-L-lysine.. Its pathway is protein modification; protein ubiquitination. E3 ubiquitin-protein ligase which accepts ubiquitin specifically from endoplasmic reticulum-associated UBC7 E2 ligase and transfers it to substrates, promoting their degradation. Component of the endoplasmic reticulum quality control (ERQC) system also called ER-associated degradation (ERAD) involved in ubiquitin-dependent degradation of misfolded endoplasmic reticulum proteins. Also promotes the degradation of normal but naturally short-lived proteins such as SGK. Protects cells from ER stress-induced apoptosis. Sequesters p53/TP53 in the cytoplasm and promotes its degradation, thereby negatively regulating its biological function in transcription, cell cycle regulation and apoptosis. Required for embryogenesis. Mediates the ubiquitination and subsequent degradation of cytoplasmic NFE2L1. During the early stage of B cell development, required for degradation of the pre-B cell receptor (pre-BCR) complex, hence supporting further differentiation into mature B cells. The polypeptide is E3 ubiquitin-protein ligase synoviolin (Syvn1) (Mus musculus (Mouse)).